The sequence spans 434 residues: GTPase Obg (434 aa).

Residues 1–158 (MFLDTAKIKV…RELQLELKIL (158 aa)) form the Obg domain. Residues 159–336 (ADVGLVGFPS…LLDATAELLD (178 aa)) enclose the OBG-type G domain. GTP-binding positions include 165-172 (GFPSVGKS), 190-194 (FTTIV), 212-215 (DLPG), 282-285 (NKMD), and 317-319 (SGL). 2 residues coordinate Mg(2+): S172 and T192. Residues 356–434 (GFDEEEKAFE…IGKFEFEFVD (79 aa)) form the OCT domain.

It belongs to the TRAFAC class OBG-HflX-like GTPase superfamily. OBG GTPase family. In terms of assembly, monomer. It depends on Mg(2+) as a cofactor.

The protein resides in the cytoplasm. An essential GTPase which binds GTP, GDP and possibly (p)ppGpp with moderate affinity, with high nucleotide exchange rates and a fairly low GTP hydrolysis rate. Plays a role in control of the cell cycle, stress response, ribosome biogenesis and in those bacteria that undergo differentiation, in morphogenesis control. In Streptococcus pneumoniae (strain ATCC 700669 / Spain 23F-1), this protein is GTPase Obg.